Reading from the N-terminus, the 492-residue chain is Metal cation symporter ZIP14 (492 aa).

The first 30 residues, 1–30 (MKLLLLHPAFQSCLLLTLLGLWRTTPEAHA), serve as a signal peptide directing secretion. Residues 31–157 (SSLGAPAISA…PSAVEVWGYG (127 aa)) are Extracellular-facing. Residues N77, N87, and N102 are each glycosylated (N-linked (GlcNAc...) asparagine). A helical membrane pass occupies residues 158–178 (LLCVTVISLCSLLGASVVPFM). Topologically, residues 179–186 (KKTFYKRL) are cytoplasmic. A helical membrane pass occupies residues 187-207 (LLYFIALAIGTLYSNALFQLI). The Extracellular portion of the chain corresponds to 208–224 (PEAFGFNPLEDYYVSKS). Residues 225 to 245 (AVVFGGFYLFFFTEKILKILL) traverse the membrane as a helical segment. Topologically, residues 246-397 (KQKNEHHHGH…LLNAGMSIQQ (152 aa)) are cytoplasmic. Residues 251–258 (HHHGHSHY) carry the HHHGHXHX-motif motif. An XEXPHE-motif motif is present at residues 376–381 (EEFPHE). Residues 398–418 (ALFFNFLSACCCYLGLAFGIL) traverse the membrane as a helical segment. Residues 419–424 (AGSHFS) lie on the Extracellular side of the membrane. A helical transmembrane segment spans residues 425–445 (ANWIFALAGGMFLYISLADMF). The Cytoplasmic portion of the chain corresponds to 446-460 (PEMNEVCQEDERKGS). A helical transmembrane segment spans residues 461 to 481 (ILIPFIIQNLGLLTGFTIMVV). The Extracellular portion of the chain corresponds to 482-492 (LTMYSGQIQIG).

It belongs to the ZIP transporter (TC 2.A.5) family. In terms of assembly, homotrimer. Post-translationally, ubiquitinated. Ubiquitination occurs upon iron depletion. The ubiquitinated form undergoes proteasomal degradation. N-glycosylated. N-glycosylation at Asn-102 is required for iron-regulated extraction of the transporter from membranes and subsequent proteasomal degradation. As to expression, ubiquitously expressed, with higher expression in liver, pancreas, fetal liver, thyroid gland, left and right ventricle, right atrium and fetal heart. Weakly expressed in spleen, thymus, and peripheral blood leukocytes. Expressed in liver and in brain by large neurons in the globus pallidus, the insular cortex and the dentate nucleus and to a lower extent in the putamen and the caudate nucleus (at protein level). Expressed in osteoblasts and giant osteoclast-like cells, but not in osteocytes found osteoblastoma and giant cell tumors (at protein level). Expressed by microvascular capillary endothelial cells that constitute the blood-brain barrier (at protein level). Expressed by macrophages. Widely expressed but not detected in brain, heart, skeletal muscle, placenta and fetal skin.

The protein localises to the cell membrane. The protein resides in the apical cell membrane. It localises to the basolateral cell membrane. It is found in the early endosome membrane. Its subcellular location is the late endosome membrane. The protein localises to the lysosome membrane. The catalysed reaction is Zn(2+)(out) + 2 hydrogencarbonate(out) = Zn(2+)(in) + 2 hydrogencarbonate(in). The enzyme catalyses Mn(2+)(out) + 2 hydrogencarbonate(out) = Mn(2+)(in) + 2 hydrogencarbonate(in). It catalyses the reaction Fe(2+)(out) + 2 hydrogencarbonate(out) = Fe(2+)(in) + 2 hydrogencarbonate(in). It carries out the reaction Cd(2+)(out) + 2 hydrogencarbonate(out) = Cd(2+)(in) + 2 hydrogencarbonate(in). In terms of biological role, electroneutral transporter of the plasma membrane mediating the cellular uptake of the divalent metal cations zinc, manganese and iron that are important for tissue homeostasis, metabolism, development and immunity. Functions as an energy-dependent symporter, transporting through the membranes an electroneutral complex composed of a divalent metal cation and two bicarbonate anions. Beside these endogenous cellular substrates, can also import cadmium a non-essential metal which is cytotoxic and carcinogenic. Controls the cellular uptake by the intestinal epithelium of systemic zinc, which is in turn required to maintain tight junctions and the intestinal permeability. Modifies the activity of zinc-dependent phosphodiesterases, thereby indirectly regulating G protein-coupled receptor signaling pathways important for gluconeogenesis and chondrocyte differentiation. Regulates insulin receptor signaling, glucose uptake, glycogen synthesis and gluconeogenesis in hepatocytes through the zinc-dependent intracellular catabolism of insulin. Through zinc cellular uptake also plays a role in the adaptation of cells to endoplasmic reticulum stress. Major manganese transporter of the basolateral membrane of intestinal epithelial cells, it plays a central role in manganese systemic homeostasis through intestinal manganese uptake. Also involved in manganese extracellular uptake by cells of the blood-brain barrier. May also play a role in manganese and zinc homeostasis participating in their elimination from the blood through the hepatobiliary excretion. Also functions in the extracellular uptake of free iron. May also function intracellularly and mediate the transport from endosomes to cytosol of iron endocytosed by transferrin. Plays a role in innate immunity by regulating the expression of cytokines by activated macrophages. In Homo sapiens (Human), this protein is Metal cation symporter ZIP14.